Reading from the N-terminus, the 435-residue chain is Trigger factor (435 aa).

The 86-residue stretch at 161 to 246 folds into the PPIase FKBP-type domain; that stretch reads GKRVSIDFVG…VNKVEARELP (86 aa).

Belongs to the FKBP-type PPIase family. Tig subfamily.

The protein resides in the cytoplasm. The enzyme catalyses [protein]-peptidylproline (omega=180) = [protein]-peptidylproline (omega=0). In terms of biological role, involved in protein export. Acts as a chaperone by maintaining the newly synthesized protein in an open conformation. Functions as a peptidyl-prolyl cis-trans isomerase. The protein is Trigger factor of Vibrio campbellii (strain ATCC BAA-1116).